Here is a 320-residue protein sequence, read N- to C-terminus: Flavonol 4'-sulfotransferase (320 aa).

69 to 74 (KSGTTW) contacts 3'-phosphoadenylyl sulfate. His-129 functions as the Proton acceptor in the catalytic mechanism. 3'-phosphoadenylyl sulfate-binding positions include Arg-151, Ser-159, Tyr-217, and 285 to 287 (RKA).

It belongs to the sulfotransferase 1 family. In terms of tissue distribution, highest in shoot tips and lowest in mature leaves and roots.

It localises to the cytoplasm. The enzyme catalyses quercetin 3-sulfate + 3'-phosphoadenylyl sulfate = quercetin 3,4'-bissulfate + adenosine 3',5'-bisphosphate + H(+). Its activity is regulated as follows. No requirement for divalent cations and insensitive to p-chloromercuribenzoate, iodoacetate, or iodoacetamide. Its function is as follows. Sulfotransferase that utilizes 3'-phospho-5'-adenylyl sulfate (PAPS) as sulfonate donor to catalyze the sulfate conjugation of quercetin 3-sulfate &gt; kaempferol 3-sulfate &gt; isorhamnetin 3-sulfate &gt; patuletin 3-sulfate, but not tamarixetin 3-sulfate. O-sulfation of position 4' of flavonol. May play a role in auxin transport. The sequence is that of Flavonol 4'-sulfotransferase from Flaveria chlorifolia (Clasping yellowtops).